A 391-amino-acid polypeptide reads, in one-letter code: Phosphoglycerate kinase (391 aa).

Substrate is bound by residues 21 to 23, Arg-36, 59 to 62, Arg-113, and Arg-146; these read DLN and HLGR. ATP is bound by residues Lys-197, Glu-319, and 345 to 348; that span reads GGDT.

The protein belongs to the phosphoglycerate kinase family. Monomer.

Its subcellular location is the cytoplasm. The catalysed reaction is (2R)-3-phosphoglycerate + ATP = (2R)-3-phospho-glyceroyl phosphate + ADP. It functions in the pathway carbohydrate degradation; glycolysis; pyruvate from D-glyceraldehyde 3-phosphate: step 2/5. This Shewanella woodyi (strain ATCC 51908 / MS32) protein is Phosphoglycerate kinase.